Consider the following 202-residue polypeptide: Small ribosomal subunit protein uS4 (202 aa).

The 64-residue stretch at 94 to 157 folds into the S4 RNA-binding domain; the sequence is SRLDNLVYRM…KDLPIVAAGA (64 aa).

The protein belongs to the universal ribosomal protein uS4 family. Part of the 30S ribosomal subunit. Contacts protein S5. The interaction surface between S4 and S5 is involved in control of translational fidelity.

Functionally, one of the primary rRNA binding proteins, it binds directly to 16S rRNA where it nucleates assembly of the body of the 30S subunit. In terms of biological role, with S5 and S12 plays an important role in translational accuracy. This is Small ribosomal subunit protein uS4 from Malacoplasma penetrans (strain HF-2) (Mycoplasma penetrans).